The chain runs to 472 residues: Uronate isomerase (472 aa).

Belongs to the metallo-dependent hydrolases superfamily. Uronate isomerase family.

The catalysed reaction is D-glucuronate = D-fructuronate. It carries out the reaction aldehydo-D-galacturonate = keto-D-tagaturonate. The protein operates within carbohydrate metabolism; pentose and glucuronate interconversion. The chain is Uronate isomerase from Xanthomonas euvesicatoria pv. vesicatoria (strain 85-10) (Xanthomonas campestris pv. vesicatoria).